Here is a 106-residue protein sequence, read N- to C-terminus: ER membrane protein complex subunit 5 (106 aa).

Topologically, residues 1-12 (MESSTINAKKIS) are cytoplasmic. A helical transmembrane segment spans residues 13-33 (VLLTLFSIIGYTAYSAHESIL). At 34–46 (EIRQDGKLPLDIK) the chain is on the lumenal side. A helical transmembrane segment spans residues 47 to 67 (CEVILVTLLFTFTTVIIASPL). Residues 68-106 (RSIQLNKWSHQRSDLAFLNSRTNFLRIKELKEKIEKVKN) are Cytoplasmic-facing.

This sequence belongs to the membrane magnesium transporter (TC 1.A.67) family. As to quaternary structure, component of the ER membrane protein complex (EMC).

It is found in the endoplasmic reticulum membrane. In terms of biological role, the EMC seems to be required for efficient folding of proteins in the endoplasmic reticulum (ER). This chain is ER membrane protein complex subunit 5 (emc5), found in Schizosaccharomyces pombe (strain 972 / ATCC 24843) (Fission yeast).